The chain runs to 412 residues: MQPWSSVPVPKVPGTARPLRLFDTAAGEVRPVTAGRTARMYVCGITPYDATHLGHAATYLAFDLVHRIWLDNGHDVHYVQNVTDIDDPLLERANRDNEDWVVLAMRETALFREDMEALRVVPPTDFIGAVESIPEIEEAVGKLLASGAAYRVDDDEYPDVYFRHSATGRFGYESNYDEATMLDLSAERGGDPDRKGKEHPLDALLWRMARDGEPSWESELGPGRPGWHLECSVIALNRLGMGFDVQGGGSDLAFPHHEFSAAHAEALAGDHPFARHYCHAGMIGLDGEKMSKSKGNLVFVSRLRGDRVDPMAIRLALLDGHYRSDRSWTADALTKGSARLARWREAVALEAGPSAEPVVERLRDRLSDDLDTERALLAVDAWVDEALCRRGGDAEAPAAIRDAVDGLLGVQL.

Zn(2+) is bound at residue C43. Residues 43-46 (CGIT), T58, and 81-83 (NVT) each bind L-cysteinyl-5'-AMP. Positions 45–55 (ITPYDATHLGH) match the 'HIGH' region motif. The 'ERGGDP' region signature appears at 187 to 192 (ERGGDP). Residue W227 coordinates L-cysteinyl-5'-AMP. A Zn(2+)-binding site is contributed by C231. 249–251 (GSD) is an L-cysteinyl-5'-AMP binding site. H256 contributes to the Zn(2+) binding site. I283 serves as a coordination point for L-cysteinyl-5'-AMP. A 'KMSKS' region motif is present at residues 289–293 (KMSKS).

This sequence belongs to the class-I aminoacyl-tRNA synthetase family. MshC subfamily. Monomer. Zn(2+) serves as cofactor.

It catalyses the reaction 1D-myo-inositol 2-amino-2-deoxy-alpha-D-glucopyranoside + L-cysteine + ATP = 1D-myo-inositol 2-(L-cysteinylamino)-2-deoxy-alpha-D-glucopyranoside + AMP + diphosphate + H(+). In terms of biological role, catalyzes the ATP-dependent condensation of GlcN-Ins and L-cysteine to form L-Cys-GlcN-Ins. The chain is L-cysteine:1D-myo-inositol 2-amino-2-deoxy-alpha-D-glucopyranoside ligase from Saccharopolyspora erythraea (strain ATCC 11635 / DSM 40517 / JCM 4748 / NBRC 13426 / NCIMB 8594 / NRRL 2338).